The following is a 468-amino-acid chain: Ribosomal protein uS12 methylthiotransferase RimO (468 aa).

One can recognise an MTTase N-terminal domain in the interval 16 to 130; the sequence is NKIHFISLGC…ILSAIESRES (115 aa). Residues cysteine 25, cysteine 61, cysteine 93, cysteine 164, cysteine 168, and cysteine 171 each contribute to the [4Fe-4S] cluster site. A Radical SAM core domain is found at 150 to 382; that stretch reads STPKHYAYLK…SQIQKRNVDK (233 aa). A TRAM domain is found at 385–455; it reads QKLIGEKIEA…GYDLVGRVVK (71 aa).

Belongs to the methylthiotransferase family. RimO subfamily. The cofactor is [4Fe-4S] cluster.

The protein localises to the cytoplasm. The enzyme catalyses L-aspartate(89)-[ribosomal protein uS12]-hydrogen + (sulfur carrier)-SH + AH2 + 2 S-adenosyl-L-methionine = 3-methylsulfanyl-L-aspartate(89)-[ribosomal protein uS12]-hydrogen + (sulfur carrier)-H + 5'-deoxyadenosine + L-methionine + A + S-adenosyl-L-homocysteine + 2 H(+). In terms of biological role, catalyzes the methylthiolation of an aspartic acid residue of ribosomal protein uS12. In Chlamydia pneumoniae (Chlamydophila pneumoniae), this protein is Ribosomal protein uS12 methylthiotransferase RimO.